The primary structure comprises 230 residues: UPF0758 protein Daud_1467 (230 aa).

The MPN domain occupies 108 to 230 (TVRTPEEAAG…FTSLKLEGLF (123 aa)). Zn(2+)-binding residues include H179, H181, and D192. Residues 179–192 (HNHPSGDPAPSPQD) carry the JAMM motif motif.

This sequence belongs to the UPF0758 family.

This chain is UPF0758 protein Daud_1467, found in Desulforudis audaxviator (strain MP104C).